We begin with the raw amino-acid sequence, 122 residues long: Large ribosomal subunit protein uL14 (122 aa).

Belongs to the universal ribosomal protein uL14 family. Part of the 50S ribosomal subunit. Forms a cluster with proteins L3 and L19. In the 70S ribosome, L14 and L19 interact and together make contacts with the 16S rRNA in bridges B5 and B8.

In terms of biological role, binds to 23S rRNA. Forms part of two intersubunit bridges in the 70S ribosome. In Anaeromyxobacter dehalogenans (strain 2CP-1 / ATCC BAA-258), this protein is Large ribosomal subunit protein uL14.